A 628-amino-acid polypeptide reads, in one-letter code: 1-deoxy-D-xylulose-5-phosphate synthase (628 aa).

Thiamine diphosphate-binding positions include H77 and 118–120 (GHS). Position 150 (D150) interacts with Mg(2+). Thiamine diphosphate is bound by residues 151–152 (GA), N180, Y288, and E369. Residue N180 coordinates Mg(2+).

Belongs to the transketolase family. DXPS subfamily. Homodimer. The cofactor is Mg(2+). Requires thiamine diphosphate as cofactor.

It catalyses the reaction D-glyceraldehyde 3-phosphate + pyruvate + H(+) = 1-deoxy-D-xylulose 5-phosphate + CO2. The protein operates within metabolic intermediate biosynthesis; 1-deoxy-D-xylulose 5-phosphate biosynthesis; 1-deoxy-D-xylulose 5-phosphate from D-glyceraldehyde 3-phosphate and pyruvate: step 1/1. In terms of biological role, catalyzes the acyloin condensation reaction between C atoms 2 and 3 of pyruvate and glyceraldehyde 3-phosphate to yield 1-deoxy-D-xylulose-5-phosphate (DXP). This chain is 1-deoxy-D-xylulose-5-phosphate synthase, found in Aquifex aeolicus (strain VF5).